The primary structure comprises 154 residues: 6,7-dimethyl-8-ribityllumazine synthase (154 aa).

5-amino-6-(D-ribitylamino)uracil-binding positions include tryptophan 23, 57–59 (AFE), and 81–83 (AVI). Position 86–87 (86–87 (AT)) interacts with (2S)-2-hydroxy-3-oxobutyl phosphate. Histidine 89 functions as the Proton donor in the catalytic mechanism. Phenylalanine 114 is a 5-amino-6-(D-ribitylamino)uracil binding site. Arginine 128 contributes to the (2S)-2-hydroxy-3-oxobutyl phosphate binding site.

It belongs to the DMRL synthase family.

The catalysed reaction is (2S)-2-hydroxy-3-oxobutyl phosphate + 5-amino-6-(D-ribitylamino)uracil = 6,7-dimethyl-8-(1-D-ribityl)lumazine + phosphate + 2 H2O + H(+). Its pathway is cofactor biosynthesis; riboflavin biosynthesis; riboflavin from 2-hydroxy-3-oxobutyl phosphate and 5-amino-6-(D-ribitylamino)uracil: step 1/2. Catalyzes the formation of 6,7-dimethyl-8-ribityllumazine by condensation of 5-amino-6-(D-ribitylamino)uracil with 3,4-dihydroxy-2-butanone 4-phosphate. This is the penultimate step in the biosynthesis of riboflavin. This chain is 6,7-dimethyl-8-ribityllumazine synthase, found in Sulfurimonas denitrificans (strain ATCC 33889 / DSM 1251) (Thiomicrospira denitrificans (strain ATCC 33889 / DSM 1251)).